The chain runs to 101 residues: Osteocalcin (101 aa).

An N-terminal signal peptide occupies residues 1–19 (MKLAILTVLLLGAAVLCLG). Residues 20–52 (SKDADHSNSVGESHSSEAFISRQESASFARLKR) constitute a propeptide that is removed on maturation. In terms of domain architecture, Gla spans 53–99 (SYGNNVGQGAAVGSPLESQREVCELNPDCDELADHIGFQEAYRRFYG). The Ca(2+) site is built by glutamate 69, glutamate 73, glutamate 76, and aspartate 82. Glutamate 69, glutamate 73, and glutamate 76 each carry 4-carboxyglutamate. Cysteine 75 and cysteine 81 form a disulfide bridge.

This sequence belongs to the osteocalcin/matrix Gla protein family. Gamma-carboxyglutamate residues are formed by vitamin K dependent carboxylation by GGCX. These residues are essential for the binding of calcium.

It localises to the secreted. In terms of biological role, the carboxylated form is one of the main organic components of the bone matrix, which constitutes 1-2% of the total bone protein. The carboxylated form binds strongly to apatite and calcium. This chain is Osteocalcin (bglap), found in Xenopus laevis (African clawed frog).